The chain runs to 323 residues: tRNA U34 carboxymethyltransferase (323 aa).

Residues Lys91, Trp105, Lys110, Gly130, 152–154, 181–182, Met196, Tyr200, and Arg315 contribute to the carboxy-S-adenosyl-L-methionine site; these read DPT and IE.

This sequence belongs to the class I-like SAM-binding methyltransferase superfamily. CmoB family. In terms of assembly, homotetramer.

The catalysed reaction is carboxy-S-adenosyl-L-methionine + 5-hydroxyuridine(34) in tRNA = 5-carboxymethoxyuridine(34) in tRNA + S-adenosyl-L-homocysteine + H(+). Its function is as follows. Catalyzes carboxymethyl transfer from carboxy-S-adenosyl-L-methionine (Cx-SAM) to 5-hydroxyuridine (ho5U) to form 5-carboxymethoxyuridine (cmo5U) at position 34 in tRNAs. This is tRNA U34 carboxymethyltransferase from Escherichia coli O157:H7.